The sequence spans 354 residues: Uroporphyrinogen decarboxylase (354 aa).

Substrate contacts are provided by residues 27–31, Asp77, Tyr154, Thr209, and His327; that span reads RQAGR.

Belongs to the uroporphyrinogen decarboxylase family. As to quaternary structure, homodimer.

It localises to the cytoplasm. It catalyses the reaction uroporphyrinogen III + 4 H(+) = coproporphyrinogen III + 4 CO2. It participates in porphyrin-containing compound metabolism; protoporphyrin-IX biosynthesis; coproporphyrinogen-III from 5-aminolevulinate: step 4/4. Functionally, catalyzes the decarboxylation of four acetate groups of uroporphyrinogen-III to yield coproporphyrinogen-III. The chain is Uroporphyrinogen decarboxylase from Pectobacterium carotovorum subsp. carotovorum (strain PC1).